Here is a 366-residue protein sequence, read N- to C-terminus: Chorismate synthase (366 aa).

The NADP(+) site is built by Arg48 and Arg54. FMN-binding positions include 125-127, 238-239, Gly278, 293-297, and Arg319; these read RSS, NA, and KPTSS.

The protein belongs to the chorismate synthase family. Homotetramer. FMNH2 is required as a cofactor.

The enzyme catalyses 5-O-(1-carboxyvinyl)-3-phosphoshikimate = chorismate + phosphate. The protein operates within metabolic intermediate biosynthesis; chorismate biosynthesis; chorismate from D-erythrose 4-phosphate and phosphoenolpyruvate: step 7/7. Catalyzes the anti-1,4-elimination of the C-3 phosphate and the C-6 proR hydrogen from 5-enolpyruvylshikimate-3-phosphate (EPSP) to yield chorismate, which is the branch point compound that serves as the starting substrate for the three terminal pathways of aromatic amino acid biosynthesis. This reaction introduces a second double bond into the aromatic ring system. This chain is Chorismate synthase, found in Neisseria gonorrhoeae (strain ATCC 700825 / FA 1090).